Here is a 104-residue protein sequence, read N- to C-terminus: Iron-sulfur cluster assembly protein CyaY (104 aa).

Belongs to the frataxin family.

Involved in iron-sulfur (Fe-S) cluster assembly. May act as a regulator of Fe-S biogenesis. The polypeptide is Iron-sulfur cluster assembly protein CyaY (Aliivibrio fischeri (strain MJ11) (Vibrio fischeri)).